Reading from the N-terminus, the 368-residue chain is DNA replication and repair protein RecF (368 aa).

30-37 (GNNAQGKT) provides a ligand contact to ATP.

It belongs to the RecF family.

The protein resides in the cytoplasm. Its function is as follows. The RecF protein is involved in DNA metabolism; it is required for DNA replication and normal SOS inducibility. RecF binds preferentially to single-stranded, linear DNA. It also seems to bind ATP. The sequence is that of DNA replication and repair protein RecF from Streptococcus pyogenes serotype M12 (strain MGAS2096).